The sequence spans 432 residues: Neuronal pentraxin-2 (432 aa).

The first 14 residues, 1-14 (MLALLTAGVALAVA), serve as a signal peptide directing secretion. N-linked (GlcNAc...) asparagine glycosylation is found at Asn149 and Asn190. Residues 224-425 (DAFKVSLPLR…GASKWPVETC (202 aa)) enclose the Pentraxin (PTX) domain. A disulfide bond links Cys254 and Cys314. Asn278, Glu356, Gln357, Asp358, and Gln368 together coordinate Ca(2+). Asn394 carries N-linked (GlcNAc...) asparagine glycosylation.

As to quaternary structure, homooligomer or heterooligomer (probably pentamer) with neuronal pentraxin receptor (NPTXR). Ca(2+) is required as a cofactor.

The protein resides in the secreted. Its function is as follows. Likely to play role in the modification of cellular properties that underlie long-term plasticity. Binds to agar matrix in a calcium-dependent manner. The sequence is that of Neuronal pentraxin-2 (Nptx2) from Rattus norvegicus (Rat).